Consider the following 188-residue polypeptide: Mediator of RNA polymerase II transcription subunit 11 (188 aa).

The stretch at 46-72 (KNKMEDNANNFKKLITQVENELSAQMQ) forms a coiled coil. A disordered region spans residues 116–188 (DPTSDEPQTT…MTDDDDDMEQ (73 aa)). Over residues 123–141 (QTTEEDEEDGSDDLNEDGA) the composition is skewed to acidic residues. A compositionally biased stretch (low complexity) spans 146–155 (SSTVTSSTTD). The span at 171-180 (SQEESGRQMT) shows a compositional bias: basic and acidic residues.

Belongs to the Mediator complex subunit 11 family. As to quaternary structure, component of the Mediator complex.

Its subcellular location is the nucleus. In terms of biological role, component of the Mediator complex, a coactivator involved in the regulated transcription of nearly all RNA polymerase II-dependent genes. Mediator functions as a bridge to convey information from gene-specific regulatory proteins to the basal RNA polymerase II transcription machinery. Mediator is recruited to promoters by direct interactions with regulatory proteins and serves as a scaffold for the assembly of a functional pre-initiation complex with RNA polymerase II and the general transcription factors. The protein is Mediator of RNA polymerase II transcription subunit 11 (mdt-11) of Caenorhabditis elegans.